The primary structure comprises 356 residues: Mitogen-activated protein kinase PMK11 (356 aa).

Residues 24 to 312 (YDIQDVVGEG…VEEALKHPYL (289 aa)) form the Protein kinase domain. ATP contacts are provided by residues 30-38 (VGEGAYGVV) and K53.

This sequence belongs to the protein kinase superfamily. CMGC Ser/Thr protein kinase family. MAP kinase subfamily. It depends on Mg(2+) as a cofactor. Phosphorylated by MST7.

It catalyses the reaction L-seryl-[protein] + ATP = O-phospho-L-seryl-[protein] + ADP + H(+). The enzyme catalyses L-threonyl-[protein] + ATP = O-phospho-L-threonyl-[protein] + ADP + H(+). In terms of biological role, mitogen-activated protein kinase; part of the MST11-MST7-PMK1 MAP kinase (MAPK) cascade that is essential for appressorium formation, penetration and invasive growth. Central regulator of appressorium development that acts downstream of the cAMP signal. The MST11-MST7-PMK1 MAP kinase cascade transduces signals from the cell surface sensors MDB2 and SHO1 that recognize various surface signals such as surface hydrophobicity, cutin monomers, and rice leaf waxes. Regulates expression of secreted fungal effector proteins implicated of host immune defenses, preventing reactive oxygen species generation and excessive callose deposition at plasmodesmata. Furthermore, controls the hyphal constriction required for fungal growth from one rice cell to the neighboring cell, enabling host tissue colonization and blast disease. Targets downstream of the PMK1-MAPK pathway include transcription factor MST12 and pathogenicity-related genes GAS1 and GAS2, both of which are expressed during appressorium formation, even if regulation of MST12 is not associated with expression of GAS1 or GAS2. This Pyricularia oryzae (strain 70-15 / ATCC MYA-4617 / FGSC 8958) (Rice blast fungus) protein is Mitogen-activated protein kinase PMK11.